A 554-amino-acid polypeptide reads, in one-letter code: Dihydroxy-acid dehydratase (554 aa).

Cys-51 is a [2Fe-2S] cluster binding site. Position 83 (Asp-83) interacts with Mg(2+). Cys-124 is a binding site for [2Fe-2S] cluster. 2 residues coordinate Mg(2+): Asp-125 and Lys-126. At Lys-126 the chain carries N6-carboxylysine. Cys-193 serves as a coordination point for [2Fe-2S] cluster. Glu-444 is a Mg(2+) binding site. The active-site Proton acceptor is the Ser-470.

This sequence belongs to the IlvD/Edd family. Homodimer. [2Fe-2S] cluster is required as a cofactor. Requires Mg(2+) as cofactor.

It carries out the reaction (2R)-2,3-dihydroxy-3-methylbutanoate = 3-methyl-2-oxobutanoate + H2O. It catalyses the reaction (2R,3R)-2,3-dihydroxy-3-methylpentanoate = (S)-3-methyl-2-oxopentanoate + H2O. It functions in the pathway amino-acid biosynthesis; L-isoleucine biosynthesis; L-isoleucine from 2-oxobutanoate: step 3/4. It participates in amino-acid biosynthesis; L-valine biosynthesis; L-valine from pyruvate: step 3/4. Its function is as follows. Functions in the biosynthesis of branched-chain amino acids. Catalyzes the dehydration of (2R,3R)-2,3-dihydroxy-3-methylpentanoate (2,3-dihydroxy-3-methylvalerate) into 2-oxo-3-methylpentanoate (2-oxo-3-methylvalerate) and of (2R)-2,3-dihydroxy-3-methylbutanoate (2,3-dihydroxyisovalerate) into 2-oxo-3-methylbutanoate (2-oxoisovalerate), the penultimate precursor to L-isoleucine and L-valine, respectively. In Vesicomyosocius okutanii subsp. Calyptogena okutanii (strain HA), this protein is Dihydroxy-acid dehydratase.